The sequence spans 953 residues: 26S proteasome non-ATPase regulatory subunit 1 (953 aa).

Methionine 1 carries the post-translational modification N-acetylmethionine; partial. Threonine 273 carries the phosphothreonine modification. The tract at residues 279-318 (PGSTNTGTVPGSEKDSDSMETEEKTGSAFVGKTPEASPEP) is disordered. Serine 290 carries the phosphoserine modification. A compositionally biased stretch (basic and acidic residues) spans 290-303 (SEKDSDSMETEEKT). N6-acetyllysine is present on lysine 310. The residue at position 311 (threonine 311) is a Phosphothreonine. Serine 315 carries the phosphoserine modification. PC repeat units follow at residues 403–436 (TATASLGVIHKGHEKEALQLMATYLPKDTSPGSA), 441–474 (GGLYALGLIHANHGGDIIDYLLNQLKNASNDIVR), 476–510 (GGSLGLGLAAMGTARQDVYDLLKTNLYQDDAVTGE), 511–545 (AAGLALGLVMLGSKNAQAIEDMVGYAQETQHEKIL), 547–580 (GLAVGIALVMYGRMEEADALIESLCRDKDPILRR), 581–616 (SGMYTVAMAYCGSGNNKAIRRLLHVAVSDVNDDVRR), 617–649 (AAVESLGFILFRTPEQCPSVVSLLSESYNPHVR), 651–685 (GAAMALGICCAGTGNKEAINLLEPMTNDPVNYVRQ), 686–726 (GALI…DVMA), and 729–761 (GAILAQGILDAGGHNVTISLQSRTGHTHMPSVV). Lysine 720 is modified (N6-acetyllysine). Threonine 830 is modified (phosphothreonine). Serine 834 is modified (phosphoserine). 2 disordered regions span residues 839-881 (AKKK…LDNP) and 930-953 (AHGPKIEEEEQEPEPPEPFEYIDD). Composition is skewed to basic and acidic residues over residues 842 to 852 (KEKEKEKKEEE) and 859 to 872 (AEKKEEKEKKKEPE). The segment covering 936 to 953 (EEEEQEPEPPEPFEYIDD) has biased composition (acidic residues).

Belongs to the proteasome subunit S1 family. As to quaternary structure, component of the 19S proteasome regulatory particle complex. The 26S proteasome consists of a 20S core particle (CP) and two 19S regulatory subunits (RP). The regulatory particle is made of a lid composed of 9 subunits, a base containing 6 ATPases and few additional components including PSMD1. Interacts with ADRM1. Interacts with ZFAND1.

Its function is as follows. Component of the 26S proteasome, a multiprotein complex involved in the ATP-dependent degradation of ubiquitinated proteins. This complex plays a key role in the maintenance of protein homeostasis by removing misfolded or damaged proteins, which could impair cellular functions, and by removing proteins whose functions are no longer required. Therefore, the proteasome participates in numerous cellular processes, including cell cycle progression, apoptosis, or DNA damage repair. In Pongo abelii (Sumatran orangutan), this protein is 26S proteasome non-ATPase regulatory subunit 1 (PSMD1).